We begin with the raw amino-acid sequence, 82 residues long: Small ribosomal subunit protein bS16 (82 aa).

Belongs to the bacterial ribosomal protein bS16 family.

This is Small ribosomal subunit protein bS16 from Haemophilus influenzae (strain 86-028NP).